A 92-amino-acid chain; its full sequence is Phospholemman (92 aa).

Residues 1–20 (MAPLHHILVLCVGFLTTATA) form the signal peptide. Over 21–35 (EAPQEHDPFTYDYQS) the chain is Extracellular. A helical membrane pass occupies residues 36 to 56 (LRIGGLIIAGILFILGILIVL). At 57 to 92 (SRRCRCKFNQQQRTGEPDEEEGTFRSSIRRLSTRRR) the chain is on the cytoplasmic side. Cys-60 is lipidated: S-palmitoyl cysteine. Residue Cys-62 is modified to S-glutathionyl cysteine; alternate. A lipid anchor (S-palmitoyl cysteine; alternate) is attached at Cys-62. The segment at 65 to 92 (NQQQRTGEPDEEEGTFRSSIRRLSTRRR) is disordered. Thr-79 carries the post-translational modification Phosphothreonine. Ser-82 is subject to Phosphoserine. Phosphoserine; by PKA and PKC is present on residues Ser-83 and Ser-88. The span at 83 to 92 (SIRRLSTRRR) shows a compositional bias: basic residues. Phosphothreonine; by PKC is present on Thr-89.

The protein belongs to the FXYD family. Homotetramer. Monomer. Regulatory subunit of the sodium/potassium-transporting ATPase (NKA) which is composed of a catalytic alpha subunit, a non-catalytic beta subunit and an additional regulatory subunit. The monomeric form associates with NKA while the oligomeric form does not. Interacts with the catalytic alpha-1 subunit ATP1A1. Also interacts with the catalytic alpha-2 and alpha-3 subunits ATP1A2 and ATP1A3. Very little interaction with the alpha subunits ATP1A1, ATP1A2 or ATP1A3 when phosphorylated at Ser-83. Interacts with non-catalytic beta-1 subunit ATP1B1. Oxidative stress decreases interaction with ATP1A1 but increases interaction with ATP1B1. Major plasma membrane substrate for cAMP-dependent protein kinase (PKA) and protein kinase C (PKC) in several different tissues. Phosphorylated in response to insulin and adrenergic stimulation. Phosphorylation at Ser-88 stimulates sodium/potassium-transporting ATPase activity while the unphosphorylated form inhibits sodium/potassium-transporting ATPase activity. Phosphorylation increases tetramerization, decreases binding to ATP1A1 and reduces inhibition of ATP1A1 activity. Phosphorylation at Ser-83 leads to greatly reduced interaction with ATP1A1, ATP1A2 and ATP1A3. May be phosphorylated by DMPK. In terms of processing, palmitoylation increases half-life and stability and is enhanced upon phosphorylation at Ser-88 by PKA. Present in heart, esophagus, stomach, aorta, skeletal muscle, smooth muscle, and liver but absent from brain and kidney.

It localises to the cell membrane. Its subcellular location is the sarcolemma. The protein resides in the apical cell membrane. The protein localises to the membrane. It is found in the caveola. It localises to the T-tubule. Associates with and regulates the activity of the sodium/potassium-transporting ATPase (NKA) which transports Na(+) out of the cell and K(+) into the cell. Inhibits NKA activity in its unphosphorylated state and stimulates activity when phosphorylated. Reduces glutathionylation of the NKA beta-1 subunit ATP1B1, thus reversing glutathionylation-mediated inhibition of ATP1B1. Contributes to female sexual development by maintaining the excitability of neurons which secrete gonadotropin-releasing hormone. This Canis lupus familiaris (Dog) protein is Phospholemman.